A 571-amino-acid chain; its full sequence is Transcription factor ABORTED MICROSPORES (571 aa).

The segment covering 275–284 (NDKDMNENGR) has biased composition (basic and acidic residues). 3 disordered regions span residues 275–321 (NDKD…AERR), 365–390 (ELQD…MSLN), and 536–571 (DDHQ…YHNQ). A bHLH domain is found at 310-359 (GSQAKNLMAERRRRKKLNDRLYALRSLVPRITKLDRASILGDAINYVKEL). The span at 368–378 (DELEENSETED) shows a compositional bias: acidic residues. Residues 381–390 (NRPQGGMSLN) show a composition bias toward polar residues. Residues 556-571 (AHHHHHHQHINHYHNQ) are compositionally biased toward basic residues.

In terms of assembly, homodimer. Interacts with ASHR3. Mostly expressed in closed, post-meiotic buds, and, to a lower extent, in pre-meiotic buds. Detected in leaves, stems, and flowers.

It localises to the nucleus. Functionally, transcription factor. Plays a crucial role in tapetum development. Required for male fertility and pollen differentiation, especially during the post-meiotic transcriptional regulation of microspore development within the developing anther. Binds E-box regions in the AHL16/TEK promoter. The chain is Transcription factor ABORTED MICROSPORES (AMS) from Arabidopsis thaliana (Mouse-ear cress).